We begin with the raw amino-acid sequence, 877 residues long: Hopanoid transporter HpnN (877 aa).

Residues M1–R16 are Cytoplasmic-facing. A helical transmembrane segment spans residues P17–R37. Over H38 to L279 the chain is Periplasmic. A helical membrane pass occupies residues N280 to A295. Residues L296 to K299 are Cytoplasmic-facing. A helical membrane pass occupies residues R300 to M323. One can recognise an SSD domain in the interval I302–L428. Over V324–V332 the chain is Periplasmic. A helical membrane pass occupies residues A333–V351. Residues K352–S373 are Cytoplasmic-facing. A helical transmembrane segment spans residues M374–P394. Residues T395–G399 are Periplasmic-facing. Residues V400 to L426 form a helical membrane-spanning segment. At R427–R452 the chain is on the cytoplasmic side. Residues H453–L472 traverse the membrane as a helical segment. The Periplasmic segment spans residues A473 to S718. The chain crosses the membrane as a helical span at residues A719–L739. The Cytoplasmic segment spans residues R740–G743. The chain crosses the membrane as a helical span at residues D744–L766. Over G767–N774 the chain is Periplasmic. The chain crosses the membrane as a helical span at residues I775–M794. The Cytoplasmic segment spans residues A795–T809. Residues H810–W827 form a helical membrane-spanning segment. Residues L828–S836 lie on the Periplasmic side of the membrane. The helical transmembrane segment at M837–V858 threads the bilayer. The Cytoplasmic segment spans residues L859–E877.

It belongs to the resistance-nodulation-cell division (RND) (TC 2.A.6) family. MmpL subfamily. As to quaternary structure, homodimer.

It localises to the cell inner membrane. Essential for hopanoid transport from the cytoplasmic to the outer membrane. Is capable of shuttling hopanoid lipids from the inner membrane to the periplasm, where they probably spontaneously insert to the inner leaflet of the outer membrane, strengthening the cell envelope. May be a proton-motive-force (PMF)-dependent transporter. Is critical for multidrug resistance and cell wall remodeling in Burkholderia. The protein is Hopanoid transporter HpnN of Burkholderia multivorans (strain ATCC 17616 / 249).